Here is a 488-residue protein sequence, read N- to C-terminus: 1-aminocyclopropane-1-carboxylate synthase-like protein 1 (488 aa).

The residue at position 273 (Lys273) is an N6-(pyridoxal phosphate)lysine.

The protein belongs to the class-I pyridoxal-phosphate-dependent aminotransferase family. Homodimer. Expressed in young leaves and flowers. Not expressed in roots.

The protein is 1-aminocyclopropane-1-carboxylate synthase-like protein 1 (ACS1) of Arabidopsis thaliana (Mouse-ear cress).